A 1121-amino-acid chain; its full sequence is Myelin transcription factor 1 (1121 aa).

Disordered regions lie at residues 1-156 and 200-376; these read MSLE…SKGS and EAAE…MTRG. A CCHHC-type 1 zinc finger spans residues 21 to 64; sequence PETTAADLSCPTPGCTGSGHVRGKYSRHRSLQSCPLAKKRKLEG. Positions 30, 35, 48, and 54 each coordinate Zn(2+). The segment covering 41–50 has biased composition (basic residues); sequence VRGKYSRHRS. 2 stretches are compositionally biased toward basic and acidic residues: residues 62-71 and 123-132; these read LEGAEAEHLV and DEIHRPETAE. Low complexity predominate over residues 147–156; that stretch reads GSATASSKGS. Positions 258-308 are enriched in acidic residues; sequence EEEDEEEEEEEEEEEEDEEEEEEEEEEEEEEEEEEEEEEEEEEEEEEEEAA. Residues 346-358 are compositionally biased toward basic and acidic residues; the sequence is VRSDDDKDEDTHS. CCHHC-type zinc fingers lie at residues 433 to 476 and 477 to 520; these read SRAE…PPEI and LAMH…KLAK. Zn(2+)-binding residues include Cys442, Cys447, His460, Cys466, Cys486, Cys491, His504, and Cys510. Disordered regions lie at residues 517-540 and 668-774; these read KLAK…SNSD and TLDL…EERK. Positions 526-540 are enriched in polar residues; the sequence is QPQTGDPSKSSSNSD. Residues 705–723 show a composition bias toward low complexity; the sequence is SSTSAPSSSMTSPQSSQAS. Residues 724-733 show a composition bias toward basic and acidic residues; sequence RQDEWDRPLD. Residues 759-770 show a composition bias toward acidic residues; the sequence is EADDQEVSEENF. 4 CCHHC-type zinc fingers span residues 791-834, 835-878, 884-927, and 937-980; these read KDIK…LRNL, MAAH…GVKV, DKED…QKEG, and KSLK…GKKG. Residues Cys800, Cys805, His818, Cys824, Cys844, Cys849, His862, Cys868, Cys893, Cys898, His911, Cys917, Cys946, Cys951, His964, and Cys970 each contribute to the Zn(2+) site.

It belongs to the MYT1 family. Interacts with STEAP3. In terms of tissue distribution, mostly in developing nervous system. Expressed in neural progenitors and oligodendrocyte lineage cells. More highly expressed in oligodendrocyte progenitors than in differentiated oligodendrocytes.

It localises to the nucleus. Binds to the promoter region of genes encoding proteolipid proteins of the central nervous system. May play a role in the development of neurons and oligodendroglia in the CNS. May regulate a critical transition point in oligodendrocyte lineage development by modulating oligodendrocyte progenitor proliferation relative to terminal differentiation and up-regulation of myelin gene transcription. In Homo sapiens (Human), this protein is Myelin transcription factor 1 (MYT1).